The following is a 297-amino-acid chain: Mycothiol acetyltransferase (297 aa).

2 consecutive N-acetyltransferase domains span residues 8–153 and 156–297; these read DALD…PPLP and VALR…QYAL. Glutamate 36 contributes to the 1D-myo-inositol 2-(L-cysteinylamino)-2-deoxy-alpha-D-glucopyranoside binding site. Residue 80-82 participates in acetyl-CoA binding; that stretch reads LAV. Positions 183, 223, and 231 each coordinate 1D-myo-inositol 2-(L-cysteinylamino)-2-deoxy-alpha-D-glucopyranoside. Residues 235 to 237 and 242 to 248 each bind acetyl-CoA; these read VGV and QGGGLGK. 1D-myo-inositol 2-(L-cysteinylamino)-2-deoxy-alpha-D-glucopyranoside is bound at residue tyrosine 269. 274–279 serves as a coordination point for acetyl-CoA; sequence NSPAVR.

This sequence belongs to the acetyltransferase family. MshD subfamily. As to quaternary structure, monomer.

It catalyses the reaction 1D-myo-inositol 2-(L-cysteinylamino)-2-deoxy-alpha-D-glucopyranoside + acetyl-CoA = mycothiol + CoA + H(+). Its function is as follows. Catalyzes the transfer of acetyl from acetyl-CoA to desacetylmycothiol (Cys-GlcN-Ins) to form mycothiol. This Actinosynnema mirum (strain ATCC 29888 / DSM 43827 / JCM 3225 / NBRC 14064 / NCIMB 13271 / NRRL B-12336 / IMRU 3971 / 101) protein is Mycothiol acetyltransferase.